Reading from the N-terminus, the 255-residue chain is 4-hydroxy-tetrahydrodipicolinate reductase (255 aa).

Residues Gly-13–Met-18, Cys-90–Thr-92, and Ser-114–Met-117 contribute to the NAD(+) site. The active-site Proton donor/acceptor is the His-147. His-148 serves as a coordination point for (S)-2,3,4,5-tetrahydrodipicolinate. Catalysis depends on Lys-151, which acts as the Proton donor. Position 157 to 158 (Gly-157 to Thr-158) interacts with (S)-2,3,4,5-tetrahydrodipicolinate.

This sequence belongs to the DapB family.

It localises to the cytoplasm. The catalysed reaction is (S)-2,3,4,5-tetrahydrodipicolinate + NAD(+) + H2O = (2S,4S)-4-hydroxy-2,3,4,5-tetrahydrodipicolinate + NADH + H(+). It carries out the reaction (S)-2,3,4,5-tetrahydrodipicolinate + NADP(+) + H2O = (2S,4S)-4-hydroxy-2,3,4,5-tetrahydrodipicolinate + NADPH + H(+). It participates in amino-acid biosynthesis; L-lysine biosynthesis via DAP pathway; (S)-tetrahydrodipicolinate from L-aspartate: step 4/4. Functionally, catalyzes the conversion of 4-hydroxy-tetrahydrodipicolinate (HTPA) to tetrahydrodipicolinate. This Clostridium tetani (strain Massachusetts / E88) protein is 4-hydroxy-tetrahydrodipicolinate reductase.